We begin with the raw amino-acid sequence, 211 residues long: Probable GTP-binding protein EngB (211 aa).

Positions 22 to 195 (PFPEVAFAGK…WQLIDSYVLP (174 aa)) constitute an EngB-type G domain. Residues 30–37 (GKSNVGKS), 57–61 (GKTQT), 75–78 (DLPG), 142–145 (TKLD), and 174–176 (FSS) each bind GTP. Mg(2+) contacts are provided by Ser37 and Thr59.

This sequence belongs to the TRAFAC class TrmE-Era-EngA-EngB-Septin-like GTPase superfamily. EngB GTPase family. Mg(2+) is required as a cofactor.

Necessary for normal cell division and for the maintenance of normal septation. This chain is Probable GTP-binding protein EngB, found in Lachnospira eligens (strain ATCC 27750 / DSM 3376 / VPI C15-48 / C15-B4) (Eubacterium eligens).